Consider the following 290-residue polypeptide: MDARAVAKRPRDPADEDNELVTALKAKREVNTISVRYLYHADHQALTARFFVPEGLVEFEAQPGALLIRMETGCDSPRHLYISLYLLGIRASNVSASTRCLLESVYTASAARAALQWLDLGPHLLHRRLETLGCVKTVSLGITSLLTCVMRGYLYNTLKTEVFALMIPKDMYLTWEETRGRLQYVYLIIVYDYDGPETRPGIYVLTSSIAHWQTLVDVARGKFARERCSFVNRRITRPRQIPLCTGVIQKLGWCLADDIHTSFLVHKELKLSVVRLDNFSVELGDFREFV.

Belongs to the herpesviridae TRX1 protein family. In terms of assembly, interacts with TRX2, MCP and capsid vertex component 2/CVC2.

It localises to the virion. The protein resides in the host nucleus. Its function is as follows. Structural component of the T=16 icosahedral capsid. The capsid is composed of pentamers and hexamers of major capsid protein/MCP, which are linked together by heterotrimers called triplexes. These triplexes are formed by a single molecule of triplex protein 1/TRX1 and two copies of triplex protein 2/TRX2. Additionally, TRX1 is required for efficient transport of TRX2 to the nucleus, which is the site of capsid assembly. The chain is Triplex capsid protein 1 from Human cytomegalovirus (strain AD169) (HHV-5).